The chain runs to 85 residues: Large ribosomal subunit protein bL27 (85 aa).

Positions 1-22 are disordered; sequence MAHKKAGGSTRNGRDSESKRLG.

This sequence belongs to the bacterial ribosomal protein bL27 family.

This is Large ribosomal subunit protein bL27 from Vibrio vulnificus (strain CMCP6).